Here is a 379-residue protein sequence, read N- to C-terminus: Oxidized polyvinyl alcohol hydrolase (379 aa).

A signal peptide spans 1–23; that stretch reads MNQSLGVLRLTRGVIALALASVA. Active-site charge relay system residues include serine 203 and serine 309.

Belongs to the peptidase S9A family. In terms of assembly, monomer.

The enzyme catalyses nonane-4,6-dione + H2O = pentan-2-one + butanoate + H(+). Catalyzes the hydrolysis of 4,6-nonanedione, a beta-diketone compound. Also mediates hydrolysis of oxidized polyvinyl alcohol (PVA) in the second step in the degradation of polyvinyl alcohol. Not active toward the monoketone structure. This is Oxidized polyvinyl alcohol hydrolase (pvaB) from Pseudomonas sp.